The following is a 712-amino-acid chain: Lactoperoxidase (712 aa).

The N-terminal stretch at Met1 to Ser22 is a signal peptide. Residues Asp23–Arg100 constitute a propeptide that is removed on maturation. N-linked (GlcNAc...) (complex) asparagine; alternate glycosylation is present at Asn106. An N-linked (GlcNAc...) (hybrid) asparagine; alternate glycan is attached at Asn106. Disulfide bonds link Cys123/Cys284, Cys132/Cys145, Cys246/Cys256, and Cys250/Cys274. A glycan (N-linked (GlcNAc...) (complex) asparagine; alternate) is linked at Asn212. An N-linked (GlcNAc...) (high mannose) asparagine; alternate glycan is attached at Asn212. Heme b is bound at residue Asp225. His226 functions as the Proton acceptor in the catalytic mechanism. Asp227 contributes to the Ca(2+) binding site. Ca(2+) contacts are provided by Thr301, Phe303, Asp305, and Ser307. Phosphoserine is present on Ser315. An N-linked (GlcNAc...) (high mannose) asparagine glycan is attached at Asn322. Cys354 and Cys365 are oxidised to a cystine. Asn358 is a glycosylation site (N-linked (GlcNAc...) asparagine). Glu375 contributes to the heme b binding site. Residue Asn449 is glycosylated (N-linked (GlcNAc...) (complex) asparagine; alternate). N-linked (GlcNAc...) (hybrid) asparagine; alternate glycosylation is present at Asn449. An N-linked (GlcNAc...) (high mannose) asparagine; alternate glycan is attached at Asn449. Residue His468 coordinates heme b. At Tyr482 the chain carries 3'-nitrotyrosine. Intrachain disulfides connect Cys573/Cys630 and Cys671/Cys696.

It belongs to the peroxidase family. XPO subfamily. Ca(2+) is required as a cofactor. It depends on heme b as a cofactor. As to expression, mammary gland; milk.

Its subcellular location is the secreted. It is found in the cytoplasm. The enzyme catalyses 2 a phenolic donor + H2O2 = 2 a phenolic radical donor + 2 H2O. It catalyses the reaction thiocyanate + H2O2 + H(+) = hypothiocyanous acid + H2O. It carries out the reaction iodide + H2O2 = hypoiodite + H2O. Functionally, heme-containing oxidoreductase which catalyzes the conversion of thiocyanate (SCN(-)) into antimicrobial agent hypothiocyanous acid (OSCN(-)) in the presence of hydrogen peroxide (H2O2). Also involved in the conversion of iodide (I(-)) into hypoiodite (IO(-)) in the presence of H2O2. Responsible for the inactivation of a wide range of micro-organisms and hence, important component of defense mechanism. Shows antibacterial properties against E.coli, K.pneumoniae, P.aeruginosa, S.sonnei, S.saphrophyticus, S.epidermidis and S.dysenteriae. May protect the udder from infection and may promote growth in newborns. May be implicated in airway host defense against infection. May contribute to maintaining an appropriate H2O2 cellular level, therefore protecting cells from H2O2-caused injuries and inflammation. In Bubalus bubalis (Domestic water buffalo), this protein is Lactoperoxidase.